A 351-amino-acid polypeptide reads, in one-letter code: 7,8-didemethyl-8-hydroxy-5-deazariboflavin synthase (351 aa).

A Radical SAM core domain is found at I35 to N275. Residues C49, C53, and C56 each contribute to the [4Fe-4S] cluster site.

Belongs to the radical SAM superfamily. CofG family. Consists of two subunits, CofG and CofH. It depends on [4Fe-4S] cluster as a cofactor.

The catalysed reaction is 5-amino-5-(4-hydroxybenzyl)-6-(D-ribitylimino)-5,6-dihydrouracil + S-adenosyl-L-methionine = 7,8-didemethyl-8-hydroxy-5-deazariboflavin + 5'-deoxyadenosine + L-methionine + NH4(+) + H(+). It participates in cofactor biosynthesis; coenzyme F0 biosynthesis. Functionally, catalyzes the radical-mediated synthesis of 7,8-didemethyl-8-hydroxy-5-deazariboflavin from 5-amino-5-(4-hydroxybenzyl)-6-(D-ribitylimino)-5,6-dihydrouracil. This chain is 7,8-didemethyl-8-hydroxy-5-deazariboflavin synthase, found in Methanococcus vannielii (strain ATCC 35089 / DSM 1224 / JCM 13029 / OCM 148 / SB).